The sequence spans 309 residues: Ribonuclease Z (309 aa).

Residues His-63, His-65, Asp-67, His-68, His-145, Asp-216, and His-274 each coordinate Zn(2+). Catalysis depends on Asp-67, which acts as the Proton acceptor.

Belongs to the RNase Z family. In terms of assembly, homodimer. Zn(2+) serves as cofactor.

It carries out the reaction Endonucleolytic cleavage of RNA, removing extra 3' nucleotides from tRNA precursor, generating 3' termini of tRNAs. A 3'-hydroxy group is left at the tRNA terminus and a 5'-phosphoryl group is left at the trailer molecule.. Its function is as follows. Zinc phosphodiesterase, which displays some tRNA 3'-processing endonuclease activity. Probably involved in tRNA maturation, by removing a 3'-trailer from precursor tRNA. In Streptococcus equi subsp. equi (strain 4047), this protein is Ribonuclease Z.